Here is a 416-residue protein sequence, read N- to C-terminus: Multifunctional CCA protein (416 aa).

Gly8 and Arg11 together coordinate ATP. The CTP site is built by Gly8 and Arg11. Residues Asp21 and Asp23 each contribute to the Mg(2+) site. Residues Arg91, Arg137, and Arg140 each contribute to the ATP site. CTP contacts are provided by Arg91, Arg137, and Arg140. An HD domain is found at 228–335; the sequence is SFIHTMLVLK…ITLFNRFDVW (108 aa).

Belongs to the tRNA nucleotidyltransferase/poly(A) polymerase family. Bacterial CCA-adding enzyme type 1 subfamily. Monomer. Can also form homodimers and oligomers. It depends on Mg(2+) as a cofactor. Ni(2+) is required as a cofactor.

The catalysed reaction is a tRNA precursor + 2 CTP + ATP = a tRNA with a 3' CCA end + 3 diphosphate. The enzyme catalyses a tRNA with a 3' CCA end + 2 CTP + ATP = a tRNA with a 3' CCACCA end + 3 diphosphate. In terms of biological role, catalyzes the addition and repair of the essential 3'-terminal CCA sequence in tRNAs without using a nucleic acid template. Adds these three nucleotides in the order of C, C, and A to the tRNA nucleotide-73, using CTP and ATP as substrates and producing inorganic pyrophosphate. tRNA 3'-terminal CCA addition is required both for tRNA processing and repair. Also involved in tRNA surveillance by mediating tandem CCA addition to generate a CCACCA at the 3' terminus of unstable tRNAs. While stable tRNAs receive only 3'-terminal CCA, unstable tRNAs are marked with CCACCA and rapidly degraded. This Haemophilus influenzae (strain PittGG) protein is Multifunctional CCA protein.